A 264-amino-acid polypeptide reads, in one-letter code: uncharacterized protein (264 aa).

Positions 1 to 23 (MQQWNLTISNILIGLFFCFSAQA) are cleaved as a signal peptide.

This is an uncharacterized protein from Shewanella oneidensis (strain ATCC 700550 / JCM 31522 / CIP 106686 / LMG 19005 / NCIMB 14063 / MR-1).